Here is a 2073-residue protein sequence, read N- to C-terminus: Dedicator of cytokinesis protein 11 (2073 aa).

Phosphoserine is present on serine 12. Phosphothreonine is present on threonine 16. Phosphoserine occurs at positions 23 and 161. The PH domain occupies 165-272 (GVIKQGWLHK…WLIMLKKIIQ (108 aa)). Tyrosine 248 carries the phosphotyrosine modification. A phosphoserine mark is found at serine 306 and serine 445. The C2 DOCK-type domain occupies 640-818 (KNHLYVYPLQ…PLLKIKTHLE (179 aa)). The segment at 1227 to 1267 (QNGHGIKREDSRGSLIPEGATGFPDPGSTSENTRQSSSRSS) is disordered. Residues serine 1237 and serine 1240 each carry the phosphoserine modification. A compositionally biased stretch (low complexity) spans 1254-1267 (STSENTRQSSSRSS). Positions 1609–2036 (KSYASTPELR…LSDIIHEQIL (428 aa)) constitute a DOCKER domain.

This sequence belongs to the DOCK family. In terms of assembly, interacts with CDC42. As to expression, expressed in spleen, thymus, mesenteric lymph nodes (MLN), bone marrow and peripheral blood lymphocytes. Enriched in B-cells from germinal centers. Expressed in B-, T- and dendritic cells as well as Purkinje cells.

Functionally, guanine nucleotide-exchange factor (GEF) that activates CDC42 by exchanging bound GDP for free GTP. Required for marginal zone (MZ) B-cell development, is associated with early bone marrow B-cell development, MZ B-cell formation, MZ B-cell number and marginal metallophilic macrophages morphology. Facilitates filopodia formation through the activation of CDC42. The polypeptide is Dedicator of cytokinesis protein 11 (Mus musculus (Mouse)).